The following is a 934-amino-acid chain: Protocadherin gamma-C3 (934 aa).

A signal peptide spans 1–31 (MVPEAWRSGLVSTGRVVGVLLLLGALNKAST). 6 consecutive Cadherin domains span residues 32 to 135 (VIHY…NPAF), 136 to 244 (PTQE…APVF), 245 to 352 (NQSL…APEI), 353 to 457 (TVTS…PPQS), 458 to 567 (SQSS…APQV), and 572 to 685 (PGGS…APRE). The Extracellular segment spans residues 32–693 (VIHYEIPEER…REQKKNLTFY (662 aa)). Asn245, Asn424, Asn478, Asn550, Asn615, and Asn689 each carry an N-linked (GlcNAc...) asparagine glycan. Residues 694–714 (LLLSLILVSVGFVVTVFGVII) form a helical membrane-spanning segment. Topologically, residues 715-934 (FKVYKWKQSR…KKKSGKKEKK (220 aa)) are cytoplasmic. 2 disordered regions span residues 804–843 (ESAPPGQQAPPNTDWRFSQAQRPGTSGSQNGDDTGTWPNN) and 904–934 (ATLTNAAGKRDGKAPAGGNGNKKKSGKKEKK). Over residues 812–843 (APPNTDWRFSQAQRPGTSGSQNGDDTGTWPNN) the composition is skewed to polar residues. The segment covering 924 to 934 (NKKKSGKKEKK) has biased composition (basic residues).

Its subcellular location is the cell membrane. In terms of biological role, potential calcium-dependent cell-adhesion protein. May be involved in the establishment and maintenance of specific neuronal connections in the brain. The protein is Protocadherin gamma-C3 (PCDHGC3) of Homo sapiens (Human).